The chain runs to 637 residues: Chaperone protein HtpG (637 aa).

Residues 1–338 (MTSTIDKNGA…SADLPLNISR (338 aa)) are a; substrate-binding. The b stretch occupies residues 339–552 (EMIQESPILA…ESGPDRQLEK (214 aa)). The tract at residues 553–637 (ILLGVGQLAG…LRRSSAGGGD (85 aa)) is c.

The protein belongs to the heat shock protein 90 family. Homodimer.

The protein localises to the cytoplasm. Functionally, molecular chaperone. Has ATPase activity. The polypeptide is Chaperone protein HtpG (Nitrobacter winogradskyi (strain ATCC 25391 / DSM 10237 / CIP 104748 / NCIMB 11846 / Nb-255)).